The primary structure comprises 421 residues: Medium-chain specific acyl-CoA dehydrogenase, mitochondrial (421 aa).

Residues 1–25 (MAAAFGRCCRVLRSISRFHWRSQHT) constitute a mitochondrion transit peptide. Position 69 is an N6-acetyllysine; alternate (lysine 69). Lysine 69 carries the N6-succinyllysine; alternate modification. 158–167 (YCVTEPGAGS) contributes to the FAD binding site. Position 167 (serine 167) interacts with octanoyl-CoA. At lysine 179 the chain carries N6-succinyllysine. 191–193 (WIT) is a binding site for FAD. Residues lysine 212, lysine 217, lysine 259, and lysine 271 each carry the N6-acetyllysine; alternate modification. 4 positions are modified to N6-succinyllysine; alternate: lysine 212, lysine 217, lysine 259, and lysine 271. Residue aspartate 278 coordinates octanoyl-CoA. Position 279 is an N6-acetyllysine (lysine 279). Octanoyl-CoA is bound at residue arginine 281. N6-acetyllysine is present on lysine 301. Residues 306-308 (RKT) and 316-317 (HQ) contribute to the FAD site. The octanoyl-CoA site is built by arginine 349 and threonine 351. Threonine 351 bears the Phosphothreonine mark. An FAD-binding site is contributed by 374 to 378 (QIFGG). Glutamate 401 lines the octanoyl-CoA pocket. The active-site Proton acceptor is glutamate 401. 402-405 (GTSQ) contributes to the FAD binding site.

The protein belongs to the acyl-CoA dehydrogenase family. In terms of assembly, homotetramer. Interacts with the heterodimeric electron transfer flavoprotein ETF. It depends on FAD as a cofactor. In terms of processing, acetylated. Could occur at proximity of the cofactor-binding sites and reduce the catalytic activity. Could be deacetylated by SIRT3.

The protein localises to the mitochondrion matrix. The enzyme catalyses a medium-chain 2,3-saturated fatty acyl-CoA + oxidized [electron-transfer flavoprotein] + H(+) = a medium-chain (2E)-enoyl-CoA + reduced [electron-transfer flavoprotein]. It carries out the reaction pentanoyl-CoA + oxidized [electron-transfer flavoprotein] + H(+) = (2E)-pentenoyl-CoA + reduced [electron-transfer flavoprotein]. It catalyses the reaction hexanoyl-CoA + oxidized [electron-transfer flavoprotein] + H(+) = (2E)-hexenoyl-CoA + reduced [electron-transfer flavoprotein]. The catalysed reaction is octanoyl-CoA + oxidized [electron-transfer flavoprotein] + H(+) = (2E)-octenoyl-CoA + reduced [electron-transfer flavoprotein]. The enzyme catalyses decanoyl-CoA + oxidized [electron-transfer flavoprotein] + H(+) = (2E)-decenoyl-CoA + reduced [electron-transfer flavoprotein]. It carries out the reaction dodecanoyl-CoA + oxidized [electron-transfer flavoprotein] + H(+) = (2E)-dodecenoyl-CoA + reduced [electron-transfer flavoprotein]. It catalyses the reaction tetradecanoyl-CoA + oxidized [electron-transfer flavoprotein] + H(+) = (2E)-tetradecenoyl-CoA + reduced [electron-transfer flavoprotein]. The catalysed reaction is oxidized [electron-transfer flavoprotein] + hexadecanoyl-CoA + H(+) = (2E)-hexadecenoyl-CoA + reduced [electron-transfer flavoprotein]. It functions in the pathway lipid metabolism; mitochondrial fatty acid beta-oxidation. Its function is as follows. Medium-chain specific acyl-CoA dehydrogenase is one of the acyl-CoA dehydrogenases that catalyze the first step of mitochondrial fatty acid beta-oxidation, an aerobic process breaking down fatty acids into acetyl-CoA and allowing the production of energy from fats. The first step of fatty acid beta-oxidation consists in the removal of one hydrogen from C-2 and C-3 of the straight-chain fatty acyl-CoA thioester, resulting in the formation of trans-2-enoyl-CoA. Electron transfer flavoprotein (ETF) is the electron acceptor that transfers electrons to the main mitochondrial respiratory chain via ETF-ubiquinone oxidoreductase (ETF dehydrogenase). Among the different mitochondrial acyl-CoA dehydrogenases, medium-chain specific acyl-CoA dehydrogenase acts specifically on acyl-CoAs with saturated 6 to 12 carbons long primary chains. The polypeptide is Medium-chain specific acyl-CoA dehydrogenase, mitochondrial (Macaca fascicularis (Crab-eating macaque)).